The following is a 313-amino-acid chain: Ribonuclease Z (313 aa).

Zn(2+) is bound by residues His-63, His-65, Asp-67, His-68, His-142, Asp-212, and His-270. Residue Asp-67 is the Proton acceptor of the active site.

Belongs to the RNase Z family. In terms of assembly, homodimer. It depends on Zn(2+) as a cofactor.

It catalyses the reaction Endonucleolytic cleavage of RNA, removing extra 3' nucleotides from tRNA precursor, generating 3' termini of tRNAs. A 3'-hydroxy group is left at the tRNA terminus and a 5'-phosphoryl group is left at the trailer molecule.. Zinc phosphodiesterase, which displays some tRNA 3'-processing endonuclease activity. Probably involved in tRNA maturation, by removing a 3'-trailer from precursor tRNA. In Enterococcus faecalis (strain ATCC 700802 / V583), this protein is Ribonuclease Z.